The sequence spans 512 residues: MAFTLTILVPCMVLALVAARPVLYWVLSVVIDAFLRWKYPLPHHAGSKPMPRARYTWPNGQGTEKFFNGRSAARQWRQRWGPIYQIWSGWCPEIVLTTPTHAVQFFRNSHRHTKAVNNDSGWLFGEVLGVCVGLLSGTDWKRVRQQVEDGFSRPTAARYTGDLVFLAREYLQNTLLASSEQSLENKGIIHVEPAKTLQFYPFLSVAQILFGRLSPMQRTQLTTLAPLREELFKEVIRGGINRLSIAPWFKSRGVRLLNEFQTQWEQFVEDAYHAAVKRNQSPRPLVIGLWEAYQAGTISKRECLQTLDESLYANLDVTTHALSWNVLLLAENGEAQTELRQEVLSALQSEASESYERYIDRDDTFLAACILESARLRPILPFSNPESAPEDLYVDGYLIPANTNVIVDAQAINIDNPYWVNGTQYNPRRFFSLNKSDVRHNMWRFGFGPRQCLGKHIGERMLKAIVAEIIRQYVISISADSALKNDLQEDSWVGLPATRIQCVPVGREVEKN.

Residues 1-19 form the signal peptide; the sequence is MAFTLTILVPCMVLALVAA. Asn-118, Asn-421, and Asn-434 each carry an N-linked (GlcNAc...) asparagine glycan. Cys-452 serves as a coordination point for heme.

Belongs to the cytochrome P450 family. It depends on heme as a cofactor.

Its pathway is mycotoxin biosynthesis. Functionally, cytochrome P450 monooxygenase; part of the gene cluster that mediates the biosynthesis of gliotoxin, a member of the epipolythiodioxopiperazine (ETP) class of toxins characterized by a disulfide bridged cyclic dipeptide. The first step in gliotoxin biosynthesis is the condensation of serine and phenylalanine to form the cyclo-L-phenylalanyl-L-serine diketopiperazine (DKP) by the NRPS gliP. GliP is also able to produce the DKP cyclo-L-tryptophanyl-L-serine, suggesting that the substrate specificity of the first adenylation (A) domain in gliP is sufficiently relaxed to accommodate both L-Phe and L-Trp. The cytochrome P450 monooxygenase gliC has been shown to catalyze the subsequent hydroxylation of the alpha-carbon of L-Phe in cyclo-L-phenylalanyl-L-serine whereas the second cytochrome P450 enzyme, gliF, is presumably involved in the modification of the DKP side chain. The glutathione S-transferase (GST) gliG then forms a bis-glutathionylated biosynthetic intermediate which is responsible for the sulfurization of gliotoxin. This bis-glutathionylated intermediate is subsequently processed by the gamma-glutamyl cyclotransferase gliK to remove both gamma-glutamyl moieties. Subsequent processing via gliI yields a biosynthetic intermediate, which is N-methylated via the N-methyltransferase gliN, before the gliotoxin oxidoreductase gliT-mediated disulfide bridge closure. GliN-mediated amide methylation confers stability to ETP, damping the spontaneous formation of tri- and tetrasulfides. Intracellular dithiol gliotoxin oxidized by gliT is subsequently effluxed by gliA. Gliotoxin contributes to pathogenesis during invasive aspergillosis. In macrophages and neutrophils, gliotoxin showed inhibition of various different cell functions including cytokine production, antigen presentation, phagocytosis, and production of reactive oxygen species. In Aspergillus fumigatus (strain ATCC MYA-4609 / CBS 101355 / FGSC A1100 / Af293) (Neosartorya fumigata), this protein is Cytochrome P450 monooxygenase gliC.